A 300-amino-acid chain; its full sequence is 2-methylisocitrate lyase (300 aa).

53–55 serves as a coordination point for substrate; that stretch reads SGD. Residues aspartate 92 and aspartate 94 each coordinate Mg(2+). Residues 129–130, arginine 162, glutamate 192, 214–216, arginine 245, and arginine 274 contribute to the substrate site; these read CG and NMT.

It belongs to the isocitrate lyase/PEP mutase superfamily. Methylisocitrate lyase family. Requires Mg(2+) as cofactor.

The enzyme catalyses 3-hydroxybutane-1,2,3-tricarboxylate = pyruvate + succinate. Functionally, involved in the methylcitric acid cycle. Catalyzes the cleavage of 2-methylisocitrate to yield pyruvate and succinate. The sequence is that of 2-methylisocitrate lyase from Halalkalibacterium halodurans (strain ATCC BAA-125 / DSM 18197 / FERM 7344 / JCM 9153 / C-125) (Bacillus halodurans).